Consider the following 317-residue polypeptide: MTTQLDSLRNMTVVVADTGDIDAIKKYQPQDATTNPSLILSASALPQYAPLIDEAVAYAKAQSNDKAQQLIDAEDKLAVNIGLEILKIVPGRISTEVDARLSYDTQATVEKARKLIALYNAAGISNDRILIKIASTWQGIRAAEILEKEGINCNLTLLFSEAQARACAEAGVYLISPFVGRILDWYKANSDKKEYAPAEDPGVISVTKIYNYYKEYGYNTVVMGASFRNVGEITELAGCDRLTIAPALLKELQENSTALVRKLEYKGEVKAKPQPLTEAEFYWQHNSDAMAVEKLAEGIRKFAIDQEKLETMLSAEL.

The active-site Schiff-base intermediate with substrate is K132.

Belongs to the transaldolase family. Type 1 subfamily. As to quaternary structure, homodimer.

It is found in the cytoplasm. The enzyme catalyses D-sedoheptulose 7-phosphate + D-glyceraldehyde 3-phosphate = D-erythrose 4-phosphate + beta-D-fructose 6-phosphate. It participates in carbohydrate degradation; pentose phosphate pathway; D-glyceraldehyde 3-phosphate and beta-D-fructose 6-phosphate from D-ribose 5-phosphate and D-xylulose 5-phosphate (non-oxidative stage): step 2/3. Functionally, transaldolase is important for the balance of metabolites in the pentose-phosphate pathway. The protein is Transaldolase of Haemophilus influenzae (strain PittEE).